The chain runs to 161 residues: Globin CTT-VIIB-10 (161 aa).

An N-terminal signal peptide occupies residues 1–16 (MKFFAVLALCIVGAIA). The 144-residue stretch at 18–161 (PLTADEASLV…NTFAIVVPRL (144 aa)) folds into the Globin domain. The heme b site is built by His-76 and His-111.

It belongs to the globin family. In terms of assembly, homodimer.

The sequence is that of Globin CTT-VIIB-10 (CTT-7B10) from Chironomus thummi thummi (Midge).